A 284-amino-acid chain; its full sequence is 2-dehydro-3-deoxyphosphooctonate aldolase (284 aa).

Belongs to the KdsA family.

The protein localises to the cytoplasm. The catalysed reaction is D-arabinose 5-phosphate + phosphoenolpyruvate + H2O = 3-deoxy-alpha-D-manno-2-octulosonate-8-phosphate + phosphate. The protein operates within carbohydrate biosynthesis; 3-deoxy-D-manno-octulosonate biosynthesis; 3-deoxy-D-manno-octulosonate from D-ribulose 5-phosphate: step 2/3. It participates in bacterial outer membrane biogenesis; lipopolysaccharide biosynthesis. This is 2-dehydro-3-deoxyphosphooctonate aldolase from Escherichia coli O157:H7.